The following is a 156-amino-acid chain: Transcriptional regulator MraZ (156 aa).

SpoVT-AbrB domains follow at residues 7–54 (NIEV…PESV) and 84–127 (VEVV…AKER).

It belongs to the MraZ family. Forms oligomers.

Its subcellular location is the cytoplasm. The protein localises to the nucleoid. This Bacteroides thetaiotaomicron (strain ATCC 29148 / DSM 2079 / JCM 5827 / CCUG 10774 / NCTC 10582 / VPI-5482 / E50) protein is Transcriptional regulator MraZ.